The following is a 388-amino-acid chain: Transposase for insertion sequence element IS406 (388 aa).

It belongs to the transposase mutator family.

Required for the transposition of the insertion element. The sequence is that of Transposase for insertion sequence element IS406 from Burkholderia multivorans (strain ATCC 17616 / 249).